Consider the following 399-residue polypeptide: Acetate kinase (399 aa).

Mg(2+) is bound at residue Asn-7. ATP is bound at residue Lys-14. Arg-90 contributes to the substrate binding site. The Proton donor/acceptor role is filled by Asp-147. ATP-binding positions include 207 to 211 (HLGNG), 282 to 284 (DFR), and 330 to 334 (GIGEN). Glu-385 contacts Mg(2+).

It belongs to the acetokinase family. In terms of assembly, homodimer. The cofactor is Mg(2+). Mn(2+) is required as a cofactor.

It is found in the cytoplasm. It catalyses the reaction acetate + ATP = acetyl phosphate + ADP. The protein operates within metabolic intermediate biosynthesis; acetyl-CoA biosynthesis; acetyl-CoA from acetate: step 1/2. In terms of biological role, catalyzes the formation of acetyl phosphate from acetate and ATP. Can also catalyze the reverse reaction. The polypeptide is Acetate kinase (Caldicellulosiruptor saccharolyticus (strain ATCC 43494 / DSM 8903 / Tp8T 6331)).